The following is a 429-amino-acid chain: Probable M18 family aminopeptidase 2 (429 aa).

Positions 82, 156, and 401 each coordinate Zn(2+).

Belongs to the peptidase M18 family. Zn(2+) is required as a cofactor.

The sequence is that of Probable M18 family aminopeptidase 2 from Pseudomonas aeruginosa (strain UCBPP-PA14).